Here is a 60-residue protein sequence, read N- to C-terminus: Large ribosomal subunit protein bL32 (60 aa).

The segment at 1–60 (MAVQQNKKTPSKRGMHRSHDFLVAPQLSVEPTTGETHMRHHISPNGFYRGRKVLKTKNDE) is disordered. Positions 49-60 (RGRKVLKTKNDE) are enriched in basic residues.

This sequence belongs to the bacterial ribosomal protein bL32 family.

The sequence is that of Large ribosomal subunit protein bL32 from Janthinobacterium sp. (strain Marseille) (Minibacterium massiliensis).